A 134-amino-acid polypeptide reads, in one-letter code: Putative pre-16S rRNA nuclease (134 aa).

It belongs to the YqgF nuclease family.

The protein localises to the cytoplasm. In terms of biological role, could be a nuclease involved in processing of the 5'-end of pre-16S rRNA. This chain is Putative pre-16S rRNA nuclease, found in Helicobacter pylori (strain P12).